Reading from the N-terminus, the 203-residue chain is MIGRLRGIIIEKQPPLVLIEVGGVGYEVHMPMTCFYELPEAGQEAIVFTHFVVREDAQLLYGFNNKQERTLFKELIKTNGVGPKLALAILSGMSAQQFVNAVEREEVGALVKLPGIGKKTAERLIVEMKDRFKGLHGDLFTPAADLVLTSPASPATNDAEQEAVAALVALGYKPQEASRMVSKIARPDASSETLIREALRAAL.

A domain I region spans residues Met1–Asn64. Positions Asn65 to Pro142 are domain II. The interval Ala143–Pro154 is flexible linker. Residues Ala155–Leu203 are domain III.

The protein belongs to the RuvA family. As to quaternary structure, homotetramer. Forms an RuvA(8)-RuvB(12)-Holliday junction (HJ) complex. HJ DNA is sandwiched between 2 RuvA tetramers; dsDNA enters through RuvA and exits via RuvB. An RuvB hexamer assembles on each DNA strand where it exits the tetramer. Each RuvB hexamer is contacted by two RuvA subunits (via domain III) on 2 adjacent RuvB subunits; this complex drives branch migration. In the full resolvosome a probable DNA-RuvA(4)-RuvB(12)-RuvC(2) complex forms which resolves the HJ.

The protein resides in the cytoplasm. Functionally, the RuvA-RuvB-RuvC complex processes Holliday junction (HJ) DNA during genetic recombination and DNA repair, while the RuvA-RuvB complex plays an important role in the rescue of blocked DNA replication forks via replication fork reversal (RFR). RuvA specifically binds to HJ cruciform DNA, conferring on it an open structure. The RuvB hexamer acts as an ATP-dependent pump, pulling dsDNA into and through the RuvAB complex. HJ branch migration allows RuvC to scan DNA until it finds its consensus sequence, where it cleaves and resolves the cruciform DNA. In Escherichia coli O9:H4 (strain HS), this protein is Holliday junction branch migration complex subunit RuvA.